A 190-amino-acid polypeptide reads, in one-letter code: MKQIVANQKVKIPEGLTVHVKSRLVTVKGPRGVLKRNFKHLAVDIRMVNPRVLKVEKWFGSKKELAAVRTVCSHVENMIKGVTKGFQYKMRSVYAHFPINCVTTEGNSVIEIRNFLGEKYIRRVKMAPGVTVVNSPKQKDELIIEGNSLEDVSSSAALIQQSTTVKNKDIRKFLDGLYVSEKTTVEVDEI.

This sequence belongs to the universal ribosomal protein uL6 family.

The sequence is that of Large ribosomal subunit protein uL6 (RpL9) from Spodoptera frugiperda (Fall armyworm).